The primary structure comprises 383 residues: Succinyl-diaminopimelate desuccinylase (383 aa).

H72 serves as a coordination point for Zn(2+). Residue D74 is part of the active site. D105 provides a ligand contact to Zn(2+). The active-site Proton acceptor is E137. Residues E138, E167, and H352 each contribute to the Zn(2+) site.

This sequence belongs to the peptidase M20A family. DapE subfamily. In terms of assembly, homodimer. Requires Zn(2+) as cofactor. It depends on Co(2+) as a cofactor.

The catalysed reaction is N-succinyl-(2S,6S)-2,6-diaminopimelate + H2O = (2S,6S)-2,6-diaminopimelate + succinate. The protein operates within amino-acid biosynthesis; L-lysine biosynthesis via DAP pathway; LL-2,6-diaminopimelate from (S)-tetrahydrodipicolinate (succinylase route): step 3/3. Catalyzes the hydrolysis of N-succinyl-L,L-diaminopimelic acid (SDAP), forming succinate and LL-2,6-diaminopimelate (DAP), an intermediate involved in the bacterial biosynthesis of lysine and meso-diaminopimelic acid, an essential component of bacterial cell walls. This is Succinyl-diaminopimelate desuccinylase from Ehrlichia ruminantium (strain Gardel).